Consider the following 226-residue polypeptide: ATP synthase F(0) complex subunit a (226 aa).

The next 6 membrane-spanning stretches (helical) occupy residues Phe-6–Phe-26, Trp-68–Leu-88, Gln-97–Phe-117, Ile-138–Val-158, Ile-164–Ile-184, and Ala-189–Ile-209.

Belongs to the ATPase A chain family. In terms of assembly, component of the ATP synthase complex composed at least of ATP5F1A/subunit alpha, ATP5F1B/subunit beta, ATP5MC1/subunit c (homooctomer), MT-ATP6/subunit a, MT-ATP8/subunit 8, ATP5ME/subunit e, ATP5MF/subunit f, ATP5MG/subunit g, ATP5MK/subunit k, ATP5MJ/subunit j, ATP5F1C/subunit gamma, ATP5F1D/subunit delta, ATP5F1E/subunit epsilon, ATP5PF/subunit F6, ATP5PB/subunit b, ATP5PD/subunit d, ATP5PO/subunit OSCP. ATP synthase complex consists of a soluble F(1) head domain (subunits alpha(3) and beta(3)) - the catalytic core - and a membrane F(0) domain - the membrane proton channel (subunits c, a, 8, e, f, g, k and j). These two domains are linked by a central stalk (subunits gamma, delta, and epsilon) rotating inside the F1 region and a stationary peripheral stalk (subunits F6, b, d, and OSCP). Interacts with DNAJC30; interaction is direct.

The protein localises to the mitochondrion inner membrane. The catalysed reaction is H(+)(in) = H(+)(out). Its function is as follows. Subunit a, of the mitochondrial membrane ATP synthase complex (F(1)F(0) ATP synthase or Complex V) that produces ATP from ADP in the presence of a proton gradient across the membrane which is generated by electron transport complexes of the respiratory chain. ATP synthase complex consist of a soluble F(1) head domain - the catalytic core - and a membrane F(1) domain - the membrane proton channel. These two domains are linked by a central stalk rotating inside the F(1) region and a stationary peripheral stalk. During catalysis, ATP synthesis in the catalytic domain of F(1) is coupled via a rotary mechanism of the central stalk subunits to proton translocation. With the subunit c (ATP5MC1), forms the proton-conducting channel in the F(0) domain, that contains two crucial half-channels (inlet and outlet) that facilitate proton movement from the mitochondrial intermembrane space (IMS) into the matrix. Protons are taken up via the inlet half-channel and released through the outlet half-channel, following a Grotthuss mechanism. In Mus musculus (Mouse), this protein is ATP synthase F(0) complex subunit a.